The sequence spans 246 residues: Sugar fermentation stimulation protein homolog (246 aa).

It belongs to the SfsA family.

This chain is Sugar fermentation stimulation protein homolog, found in Prochlorococcus marinus (strain MIT 9215).